A 327-amino-acid polypeptide reads, in one-letter code: MKKIIKVEAVEKHFGNQVIIPPLSLDIKEGEFLTILGPSGCGKTTLLRMIAGFETPTKGNLLLDDERINDLPPYKRHMNLVFQHYALFPHMTVEKNICFGMKMQKVSAAEQKERAEEAMRLTQLLEFRNRKPAKLSGGQQQRVAIARAIVNNPRVLLLDEPLGALDFKLRKDLQRELKNLQRNLGITFIYVTHDQEEAMSMSDRIVVMNKGHIEQIGTPKEIYNKPKTLFVATFIGENNIVKNGEGYVAIRPENVKVRSVEEPILKEYHLGHIEDIEFVGNMEKLYVRDEKTSELLMAYQTAEEAAQWSIGDNVYVGWEQEDEVTLN.

Residues 5–235 (IKVEAVEKHF…PKTLFVATFI (231 aa)) enclose the ABC transporter domain. Position 37–44 (37–44 (GPSGCGKT)) interacts with ATP.

Belongs to the ABC transporter superfamily. Spermidine/putrescine importer (TC 3.A.1.11.1) family. The complex is composed of two ATP-binding proteins (PotA), two transmembrane proteins (PotB and PotC) and a solute-binding protein (PotD).

The protein resides in the cell membrane. The enzyme catalyses ATP + H2O + polyamine-[polyamine-binding protein]Side 1 = ADP + phosphate + polyamineSide 2 + [polyamine-binding protein]Side 1.. In terms of biological role, part of the ABC transporter complex PotABCD involved in spermidine/putrescine import. Responsible for energy coupling to the transport system. The chain is Spermidine/putrescine import ATP-binding protein PotA from Bacillus cereus (strain ATCC 14579 / DSM 31 / CCUG 7414 / JCM 2152 / NBRC 15305 / NCIMB 9373 / NCTC 2599 / NRRL B-3711).